The primary structure comprises 119 residues: Phosphoribosyl-AMP cyclohydrolase (119 aa).

Aspartate 77 contributes to the Mg(2+) binding site. Cysteine 78 provides a ligand contact to Zn(2+). Residues aspartate 79 and aspartate 81 each contribute to the Mg(2+) site. 2 residues coordinate Zn(2+): cysteine 94 and cysteine 101.

This sequence belongs to the PRA-CH family. In terms of assembly, homodimer. Mg(2+) is required as a cofactor. The cofactor is Zn(2+).

It localises to the cytoplasm. It carries out the reaction 1-(5-phospho-beta-D-ribosyl)-5'-AMP + H2O = 1-(5-phospho-beta-D-ribosyl)-5-[(5-phospho-beta-D-ribosylamino)methylideneamino]imidazole-4-carboxamide. Its pathway is amino-acid biosynthesis; L-histidine biosynthesis; L-histidine from 5-phospho-alpha-D-ribose 1-diphosphate: step 3/9. Its function is as follows. Catalyzes the hydrolysis of the adenine ring of phosphoribosyl-AMP. This chain is Phosphoribosyl-AMP cyclohydrolase, found in Dinoroseobacter shibae (strain DSM 16493 / NCIMB 14021 / DFL 12).